A 746-amino-acid chain; its full sequence is NAD(P)H-quinone oxidoreductase subunit 5, chloroplastic (746 aa).

16 helical membrane passes run 9–29 (WMIP…LLLF), 40–60 (WAFL…DLSI), 89–109 (IDPL…LVLI), 125–145 (FAYM…SNLI), 147–167 (VYIF…FWFT), 185–205 (GDFG…SFEF), 219–239 (NQVH…GPVA), 258–278 (TPIS…FLVA), 280–300 (LLPL…IGII), 327–347 (LGYM…FHLI), 354–374 (ALLF…VGYS), 396–416 (TTFL…CFWS), 425–445 (WLYS…TAFY), 546–566 (ILFP…IGIP), 607–627 (FSVS…KPAY), and 723–743 (LLLY…LNLL).

It belongs to the complex I subunit 5 family. In terms of assembly, NDH is composed of at least 16 different subunits, 5 of which are encoded in the nucleus.

The protein localises to the plastid. It is found in the chloroplast thylakoid membrane. It catalyses the reaction a plastoquinone + NADH + (n+1) H(+)(in) = a plastoquinol + NAD(+) + n H(+)(out). It carries out the reaction a plastoquinone + NADPH + (n+1) H(+)(in) = a plastoquinol + NADP(+) + n H(+)(out). Functionally, NDH shuttles electrons from NAD(P)H:plastoquinone, via FMN and iron-sulfur (Fe-S) centers, to quinones in the photosynthetic chain and possibly in a chloroplast respiratory chain. The immediate electron acceptor for the enzyme in this species is believed to be plastoquinone. Couples the redox reaction to proton translocation, and thus conserves the redox energy in a proton gradient. This is NAD(P)H-quinone oxidoreductase subunit 5, chloroplastic (ndhF) from Carica papaya (Papaya).